The chain runs to 61 residues: Small ribosomal subunit protein uS14 (61 aa).

The Zn(2+) site is built by Cys24, Cys27, Cys40, and Cys43.

This sequence belongs to the universal ribosomal protein uS14 family. Zinc-binding uS14 subfamily. Part of the 30S ribosomal subunit. Contacts proteins S3 and S10. Zn(2+) is required as a cofactor.

Binds 16S rRNA, required for the assembly of 30S particles and may also be responsible for determining the conformation of the 16S rRNA at the A site. The protein is Small ribosomal subunit protein uS14 of Nautilia profundicola (strain ATCC BAA-1463 / DSM 18972 / AmH).